The sequence spans 142 residues: Ribosome-binding factor A (142 aa).

Positions 119-142 (EAKQKQHGVETDAEQGDTKEEGDK) are disordered.

It belongs to the RbfA family. In terms of assembly, monomer. Binds 30S ribosomal subunits, but not 50S ribosomal subunits or 70S ribosomes.

The protein resides in the cytoplasm. Functionally, one of several proteins that assist in the late maturation steps of the functional core of the 30S ribosomal subunit. Associates with free 30S ribosomal subunits (but not with 30S subunits that are part of 70S ribosomes or polysomes). Required for efficient processing of 16S rRNA. May interact with the 5'-terminal helix region of 16S rRNA. This chain is Ribosome-binding factor A, found in Shewanella pealeana (strain ATCC 700345 / ANG-SQ1).